A 300-amino-acid polypeptide reads, in one-letter code: Urease accessory protein UreD (300 aa).

The protein belongs to the UreD family. UreD, UreF and UreG form a complex that acts as a GTP-hydrolysis-dependent molecular chaperone, activating the urease apoprotein by helping to assemble the nickel containing metallocenter of UreC. The UreE protein probably delivers the nickel.

The protein localises to the cytoplasm. Required for maturation of urease via the functional incorporation of the urease nickel metallocenter. In Prochlorococcus marinus (strain AS9601), this protein is Urease accessory protein UreD.